The chain runs to 322 residues: Digestive cysteine proteinase 1 (322 aa).

The signal sequence occupies residues 1-16 (MKVVALFLFGLALAAA). A propeptide spans 17-105 (NPSWEEFKGK…VFTSTDAAPE (89 aa)) (activation peptide). 3 cysteine pairs are disulfide-bonded: cysteine 126–cysteine 170, cysteine 160–cysteine 203, and cysteine 262–cysteine 311. Residue cysteine 129 is part of the active site. Active-site residues include histidine 269 and asparagine 289.

The protein belongs to the peptidase C1 family.

Its activity is regulated as follows. Inhibited by E-64, antipain, leupeptin, heavy metal ions, iodoacetic acid, dithionitrobenzene, p-hydroxymercuri-benzoate; activated by mercaptoethanol and dithiothreitol. The polypeptide is Digestive cysteine proteinase 1 (LCP1) (Homarus americanus (American lobster)).